We begin with the raw amino-acid sequence, 137 residues long: Nucleoside diphosphate kinase (137 aa).

Residues Lys-10, Phe-59, Arg-87, Thr-93, Arg-104, and Asn-114 each coordinate ATP. The active-site Pros-phosphohistidine intermediate is His-117.

The protein belongs to the NDK family. As to quaternary structure, homotetramer. It depends on Mg(2+) as a cofactor.

Its subcellular location is the cytoplasm. It catalyses the reaction a 2'-deoxyribonucleoside 5'-diphosphate + ATP = a 2'-deoxyribonucleoside 5'-triphosphate + ADP. The enzyme catalyses a ribonucleoside 5'-diphosphate + ATP = a ribonucleoside 5'-triphosphate + ADP. In terms of biological role, major role in the synthesis of nucleoside triphosphates other than ATP. The ATP gamma phosphate is transferred to the NDP beta phosphate via a ping-pong mechanism, using a phosphorylated active-site intermediate. The polypeptide is Nucleoside diphosphate kinase (Streptomyces avermitilis (strain ATCC 31267 / DSM 46492 / JCM 5070 / NBRC 14893 / NCIMB 12804 / NRRL 8165 / MA-4680)).